Reading from the N-terminus, the 157-residue chain is dCTP deaminase (157 aa).

DCTP contacts are provided by residues 79 to 84, aspartate 95, glutamine 124, and tyrosine 138; that span reads RSSLAR.

Belongs to the dCTP deaminase family. In terms of assembly, homotrimer.

The enzyme catalyses dCTP + H2O + H(+) = dUTP + NH4(+). It functions in the pathway pyrimidine metabolism; dUMP biosynthesis; dUMP from dCTP (dUTP route): step 1/2. Functionally, catalyzes the deamination of dCTP to dUTP. The chain is dCTP deaminase from Thermococcus gammatolerans (strain DSM 15229 / JCM 11827 / EJ3).